The primary structure comprises 344 residues: MEHALTLSQHTREYAGTDPLRLAVAAAIDAIAEASIEMAELIGRGALAGITGEAQGSSNADGDVQKDLDVRCDEMILEALKKLPFAALASEESEALVYGDPMAPISVAFDPLDGSSNIDTNATVGTIFSIIPTIVGVAPFTAPGKVQLAAGFVVYGPQTSLVLTTGDGVDIFTLDRAAHVYKRIRHKVRIPTDTPEFAINASNHRHWEQPVRDFVEECLAGTEGPRSKDFNMRWLGSLVAEAYRILTRGGVFLYPGDGRPGYSEGRLRLLYECHPMAFIMEQAGGGASTGREHVLDLAARTIHQRAPLIMGSIDKVNRVELLHNDPDAASRSAPLFARRGLFRV.

Positions 91, 110, 112, and 113 each coordinate Mg(2+). Residues 113 to 116 (DGSS) and Asn-200 contribute to the substrate site. Glu-272 is a Mg(2+) binding site.

It belongs to the FBPase class 1 family. As to quaternary structure, homotetramer. Requires Mg(2+) as cofactor.

It localises to the cytoplasm. It carries out the reaction beta-D-fructose 1,6-bisphosphate + H2O = beta-D-fructose 6-phosphate + phosphate. It participates in carbohydrate biosynthesis; Calvin cycle. This is Fructose-1,6-bisphosphatase class 1 from Rhodopseudomonas palustris (strain BisA53).